A 155-amino-acid polypeptide reads, in one-letter code: Large ribosomal subunit protein uL30 (155 aa).

This sequence belongs to the universal ribosomal protein uL30 family. Part of the 50S ribosomal subunit.

This is Large ribosomal subunit protein uL30 from Nitrosopumilus maritimus (strain SCM1).